The primary structure comprises 332 residues: GTP 3',8-cyclase (332 aa).

The 226-residue stretch at 9-234 (TFGRRISYLR…DSDHRTGGPS (226 aa)) folds into the Radical SAM core domain. Residue R18 coordinates GTP. [4Fe-4S] cluster-binding residues include C25 and C29. Y31 lines the S-adenosyl-L-methionine pocket. C32 is a binding site for [4Fe-4S] cluster. R67 contacts GTP. G71 serves as a coordination point for S-adenosyl-L-methionine. Residue T100 coordinates GTP. S124 is a binding site for S-adenosyl-L-methionine. Residue K160 coordinates GTP. M194 serves as a coordination point for S-adenosyl-L-methionine. C257 and C260 together coordinate [4Fe-4S] cluster. 262–264 (RVR) provides a ligand contact to GTP. C274 contacts [4Fe-4S] cluster.

Belongs to the radical SAM superfamily. MoaA family. Monomer and homodimer. It depends on [4Fe-4S] cluster as a cofactor.

The enzyme catalyses GTP + AH2 + S-adenosyl-L-methionine = (8S)-3',8-cyclo-7,8-dihydroguanosine 5'-triphosphate + 5'-deoxyadenosine + L-methionine + A + H(+). The protein operates within cofactor biosynthesis; molybdopterin biosynthesis. Its function is as follows. Catalyzes the cyclization of GTP to (8S)-3',8-cyclo-7,8-dihydroguanosine 5'-triphosphate. The polypeptide is GTP 3',8-cyclase (Erythrobacter litoralis (strain HTCC2594)).